Consider the following 638-residue polypeptide: Autolysin (638 aa).

A signal peptide spans 1-28 (MSLATRRFGAAAALLVAACVLCTAPAWA). The propeptide at 29–183 (QNETTGTGMV…LKSILKGSQK (155 aa)) is activation peptide. N30 carries N-linked (GlcNAc...) asparagine glycosylation. Residues 95 to 102 (PRCNVPRA) carry the Cysteine switch motif. A Zn(2+)-binding site is contributed by C97. An N-linked (GlcNAc...) asparagine glycan is attached at N126. Residues 269-292 (VTPPPRPPRPPRPPPRAGSTISSL) are disordered. Positions 270-284 (TPPPRPPRPPRPPPR) are enriched in pro residues. An N-linked (GlcNAc...) asparagine glycan is attached at N296. Residue H396 coordinates Zn(2+). E397 is a catalytic residue. 2 residues coordinate Zn(2+): H400 and H406. N-linked (GlcNAc...) asparagine glycosylation is found at N458, N465, N470, and N523.

It belongs to the peptidase M11 family. The cofactor is Zn(2+). In terms of processing, present in 2 forms: an inactive V-form in vegetative cells and an active and soluble G-form. The V-form enzyme may be converted to the G-form enzyme during gametic differentiation under nitrogen-starved conditions.

It is found in the periplasm. The protein localises to the secreted. Its subcellular location is the cell wall. The enzyme catalyses Cleavage of the proline- and hydroxyproline-rich proteins of the Chlamydomonas cell wall. Also cleaves azocasein, gelatin and Leu-Trp-Met-|-Arg-Phe-Ala.. In terms of biological role, mediates digestion of the cell walls of the 2 mating type gametes during mating as a necessary prelude to cell fusion. This enzyme acts specifically on the framework proteins (inner wall) of the cell wall, cleaving several model peptides at specific sites. The chain is Autolysin from Chlamydomonas reinhardtii (Chlamydomonas smithii).